Reading from the N-terminus, the 500-residue chain is Ephrin type-B receptor 3 (500 aa).

The Fibronectin type-III domain maps to 1 to 64; that stretch reads PLLVLDLIIQ…NPVDFSTSLY (64 aa). Residues 1–113 are Extracellular-facing; that stretch reads PLLVLDLIIQ…ERSVQDLLPL (113 aa). Positions 76-103 are disordered; that stretch reads HLRRREELTTTTTGLKSREERFQKSDDP. The span at 91–103 shows a compositional bias: basic and acidic residues; it reads KSREERFQKSDDP. Residues 114-134 form a helical membrane-spanning segment; the sequence is IVGSASAGFVVILAMIVIAVV. The Cytoplasmic segment spans residues 135 to 500; sequence CLRRQRTGSE…QMSQTLPIRV (366 aa). Residue Tyr168 is modified to Phosphotyrosine; by autocatalysis. One can recognise a Protein kinase domain in the interval 187 to 450; the sequence is VKIEEVIGAG…QIVSTLDKFL (264 aa). ATP is bound by residues 193–201 and Lys219; that span reads IGAGEFGEV. The active-site Proton acceptor is the Asp312. Residues 421–500 form the SAM domain; that stretch reads LHQLMLECWV…QMSQTLPIRV (80 aa). Residues 498–500 carry the PDZ-binding motif; sequence IRV.

The protein belongs to the protein kinase superfamily. Tyr protein kinase family. Ephrin receptor subfamily. As to quaternary structure, heterotetramer upon binding of the ligand. The heterotetramer is composed of an ephrin dimer and a receptor dimer. Oligomerization is probably required to induce biological responses. In terms of processing, phosphorylated. Autophosphorylates upon ligand-binding. Autophosphorylation on Tyr-168 is required for interaction with SH2 domain-containing proteins. Widely expressed in the developing nervous system.

The protein localises to the cell membrane. Its subcellular location is the cell projection. It is found in the dendrite. It carries out the reaction L-tyrosyl-[protein] + ATP = O-phospho-L-tyrosyl-[protein] + ADP + H(+). Receptor tyrosine kinase which binds promiscuously transmembrane ephrin-B family ligands residing on adjacent cells, leading to contact-dependent bidirectional signaling into neighboring cells. The signaling pathway downstream of the receptor is referred to as forward signaling while the signaling pathway downstream of the ephrin ligand is referred to as reverse signaling. Generally has an overlapping and redundant function with EPHB2. Like EPHB2, functions in axon guidance during development. In addition to its role in axon guidance also plays an important redundant role with other ephrin-B receptors in development and maturation of dendritic spines and the formation of excitatory synapses. May control other aspects of development through regulation of cell migration and positioning. May play a role in early pattern formation within the developing nervous system. This Danio rerio (Zebrafish) protein is Ephrin type-B receptor 3 (ephb3).